Consider the following 334-residue polypeptide: L-lactate dehydrogenase B chain (334 aa).

Ala-2 is subject to N-acetylalanine. The residue at position 7 (Lys-7) is an N6-acetyllysine. An NAD(+)-binding site is contributed by 31–53; sequence QVGMACAISILGKSLADELALVD. Ser-44 bears the Phosphoserine mark. Lys-58 is modified (N6-acetyllysine). An NAD(+)-binding site is contributed by Arg-100. Arg-107 contributes to the substrate binding site. N6-acetyllysine is present on Lys-119. Residue Asn-139 participates in NAD(+) binding. The substrate site is built by Asn-139 and Arg-170. The Proton acceptor role is filled by His-194. At Tyr-240 the chain carries Phosphotyrosine. Thr-249 is a substrate binding site. Lys-329 is subject to N6-acetyllysine.

Belongs to the LDH/MDH superfamily. LDH family. As to quaternary structure, homotetramer. Interacts with PTEN upstream reading frame protein MP31; the interaction leads to inhibition of mitochondrial lactate dehydrogenase activity, preventing conversion of lactate to pyruvate in mitochondria. In terms of tissue distribution, predominantly expressed in aerobic tissues such as cardiac muscle.

The protein resides in the cytoplasm. Its subcellular location is the mitochondrion inner membrane. It carries out the reaction (S)-lactate + NAD(+) = pyruvate + NADH + H(+). The protein operates within fermentation; pyruvate fermentation to lactate; (S)-lactate from pyruvate: step 1/1. Functionally, interconverts simultaneously and stereospecifically pyruvate and lactate with concomitant interconversion of NADH and NAD(+). The chain is L-lactate dehydrogenase B chain (LDHB) from Homo sapiens (Human).